The sequence spans 52 residues: Conotoxin Ac4.3a (52 aa).

A propeptide spanning residues 1–11 is cleaved from the precursor; that stretch reads SDFRNAAVHER. A Pyrrolidone carboxylic acid modification is found at Gln-12. The residue at position 14 (Glu-14) is a 4-carboxyglutamate. Thr-18 and Thr-20 each carry an O-linked (HexNAc...) threonine glycan. A 4-hydroxyproline mark is found at Pro-28, Pro-33, and Pro-47. A Proline amide modification is found at Pro-47. Residues 48-52 constitute a propeptide that is removed on maturation; that stretch reads GRRND.

It belongs to the conotoxin A superfamily. Post-translationally, contains 3 disulfide bonds. Expressed by the venom duct.

It localises to the secreted. Probable neurotoxin with ion channel inhibitor activity. The protein is Conotoxin Ac4.3a of Conus achatinus (Little frog cone).